Consider the following 368-residue polypeptide: P2X receptor C (368 aa).

Residues 1 to 24 (MLDWDSILAYNTIKVVRIRDRRLG) are Cytoplasmic-facing. Residues 25–45 (ILHLIFMIAIISYVVIYSAII) form a helical membrane-spanning segment. Residues 46 to 368 (KKGYLSIEEP…DKLYHNIEAL (323 aa)) lie on the Lumenal side of the membrane. The segment at 282–295 (RHAIRLIFIQTGVI) is pore-forming motif.

The protein belongs to the P2X receptor family.

It localises to the contractile vacuole membrane. Functionally, P2X receptors are ligand-gated ion channels that play a role in intracellular calcium signaling. ATP does not evoke inward currents in p2xC. Not essential for osmoregulation. This Dictyostelium discoideum (Social amoeba) protein is P2X receptor C (p2xC).